The following is a 132-amino-acid chain: Secreted RxLR effector protein RXLR-C22 (132 aa).

Positions 1–21 are cleaved as a signal peptide; sequence MRSLVWAVIATLIVLTPFSEA. The short motif at 56-74 is the RxLR-dEER element; that stretch reads RKLQSDSVKKGDSTGLEER. N-linked (GlcNAc...) asparagine glycosylation occurs at Asn-116.

It belongs to the RxLR effector family.

It localises to the secreted. It is found in the host Golgi apparatus. Secreted effector that does not suppress pattern-triggered immunity (PTI) in plant host. This chain is Secreted RxLR effector protein RXLR-C22, found in Plasmopara halstedii (Downy mildew of sunflower).